We begin with the raw amino-acid sequence, 431 residues long: Glutamate-1-semialdehyde 2,1-aminomutase 1 (431 aa).

Lys-268 bears the N6-(pyridoxal phosphate)lysine mark.

The protein belongs to the class-III pyridoxal-phosphate-dependent aminotransferase family. HemL subfamily. Homodimer. It depends on pyridoxal 5'-phosphate as a cofactor.

The protein resides in the cytoplasm. It carries out the reaction (S)-4-amino-5-oxopentanoate = 5-aminolevulinate. It functions in the pathway porphyrin-containing compound metabolism; protoporphyrin-IX biosynthesis; 5-aminolevulinate from L-glutamyl-tRNA(Glu): step 2/2. This is Glutamate-1-semialdehyde 2,1-aminomutase 1 from Anoxybacillus flavithermus (strain DSM 21510 / WK1).